Consider the following 287-residue polypeptide: 1-acyl-sn-glycerol-3-phosphate acyltransferase alpha (287 aa).

The signal sequence occupies residues 1 to 26; sequence MELWPGAGTLLLLLFLLLLLLLPTLW. Residues 27–37 are Lumenal-facing; that stretch reads FCSPSAKYFFK. A helical transmembrane segment spans residues 38–58; that stretch reads MAFYNGWILFLAVLAIPVCAV. Residues 59 to 127 are Cytoplasmic-facing; sequence RGRNVENMKI…PGRCVPIAKR (69 aa). The HXXXXD motif signature appears at 104-109; that stretch reads HQSSLD. The chain crosses the membrane as a helical span at residues 128 to 148; that stretch reads ELLWAGSAGLACWLAGVIFID. Residues 149 to 287 are Lumenal-facing; sequence RKRTGDAISV…KPGGVGEAGL (139 aa). The short motif at 178-181 is the EGTR motif element; that stretch reads EGTR.

Belongs to the 1-acyl-sn-glycerol-3-phosphate acyltransferase family.

It localises to the endoplasmic reticulum membrane. The enzyme catalyses a 1-acyl-sn-glycero-3-phosphate + an acyl-CoA = a 1,2-diacyl-sn-glycero-3-phosphate + CoA. It catalyses the reaction 1-(9Z-octadecenoyl)-sn-glycero-3-phosphate + (9Z)-octadecenoyl-CoA = 1,2-di-(9Z-octadecenoyl)-sn-glycero-3-phosphate + CoA. It carries out the reaction 1-(9Z-octadecenoyl)-sn-glycero-3-phosphate + hexadecanoyl-CoA = 1-(9Z)-octadecenoyl-2-hexadecanoyl-sn-glycero-3-phosphate + CoA. The catalysed reaction is heptadecanoyl-CoA + 1-(9Z-octadecenoyl)-sn-glycero-3-phosphate = 1-(9Z)-octadecenoyl-2-heptadecanoyl-sn-glycero-3-phosphate + CoA. The enzyme catalyses 1-(9Z-octadecenoyl)-sn-glycero-3-phosphate + octadecanoyl-CoA = 1-(9Z-octadecenoyl)-2-octadecanoyl-sn-glycero-3-phosphate + CoA. It catalyses the reaction 1-(9Z-octadecenoyl)-sn-glycero-3-phosphate + (9Z,12Z)-octadecadienoyl-CoA = 1-(9Z)-octadecenoyl-2-(9Z,12Z)-octadecadienoyl-sn-glycero-3-phosphate + CoA. It carries out the reaction 1-(9Z-octadecenoyl)-sn-glycero-3-phosphate + tetradecanoyl-CoA = 1-(9Z)-octadecenoyl-2-tetradecanoyl-sn-glycero-3-phosphate + CoA. The catalysed reaction is pentadecanoyl-CoA + 1-(9Z-octadecenoyl)-sn-glycero-3-phosphate = 1-(9Z)-octadecenoyl-2-pentadecanoyl-sn-glycero-3-phosphate + CoA. The enzyme catalyses 1-hexadecanoyl-sn-glycero-3-phosphate + (9Z)-octadecenoyl-CoA = 1-hexadecanoyl-2-(9Z-octadecenoyl)-sn-glycero-3-phosphate + CoA. It catalyses the reaction 1-(9Z,12Z,15Z)-octadecatrienoyl-sn-glycero-3-phosphate + (9Z)-octadecenoyl-CoA = 1-(9Z,12Z,15Z)-octadecatrienoyl-2-(9Z)-octadecenoyl-sn-glycero-3-phosphate + CoA. It carries out the reaction 1-(6Z,9Z,12Z-octadecatrienoyl)-sn-glycero-3-phosphate + (9Z)-octadecenoyl-CoA = (6Z,9Z,12Z)-octadecatrienoyl-2-(9Z)-octadecenoyl-sn-glycero-3-phosphate + CoA. The catalysed reaction is 1-eicosanoyl-sn-glycero-3-phosphate + (9Z)-octadecenoyl-CoA = 1-eicosanoyl-2-(9Z)-octadecenoyl-sn-glycero-3-phosphate + CoA. The enzyme catalyses 1-tetradecanoyl-sn-glycerol 3-phosphate + (9Z)-octadecenoyl-CoA = 1-tetradecanoyl-2-(9Z)-octadecenoyl-sn-glycero-3-phosphate + CoA. It catalyses the reaction 1-(9Z-octadecenoyl)-sn-glycero-3-phosphate + (5Z,8Z,11Z,14Z)-eicosatetraenoyl-CoA = 1-(9Z)-octadecenoyl-2-(5Z,8Z,11Z,14Z)-eicosatetraenoyl-sn-glycero-3-phosphate + CoA. It carries out the reaction 1-(9Z-octadecenoyl)-sn-glycero-3-phosphate + dodecanoyl-CoA = 1-(9Z)-octadecenoyl-2-dodecanoyl-sn-glycero-3-phosphate + CoA. The catalysed reaction is (6Z)-octadecenoyl-CoA + 1-(9Z-octadecenoyl)-sn-glycero-3-phosphate = 1-(9Z)-octadecenoyl-2-(6Z)-octadecenoyl-sn-glycero-3-phosphate + CoA. The enzyme catalyses (11Z)-octadecenoyl-CoA + 1-(9Z-octadecenoyl)-sn-glycero-3-phosphate = 1-(9Z)-octadecenoyl-2-(11Z)-octadecenoyl-sn-glycero-3-phosphate + CoA. It catalyses the reaction (9Z)-hexadecenoyl-CoA + 1-(9Z-octadecenoyl)-sn-glycero-3-phosphate = 1-(9Z-octadecenoyl)-2-(9Z-hexadecenoyl)-sn-glycero-3-phosphate + CoA. Its pathway is phospholipid metabolism; CDP-diacylglycerol biosynthesis; CDP-diacylglycerol from sn-glycerol 3-phosphate: step 2/3. Converts 1-acyl-sn-glycerol-3-phosphate (lysophosphatidic acid or LPA) into 1,2-diacyl-sn-glycerol-3-phosphate (phosphatidic acid or PA) by incorporating an acyl moiety at the sn-2 position of the glycerol backbone. This is 1-acyl-sn-glycerol-3-phosphate acyltransferase alpha (AGPAT1) from Bos taurus (Bovine).